The primary structure comprises 382 residues: Succinyl-diaminopimelate desuccinylase (382 aa).

His73 contacts Zn(2+). The active site involves Asp75. Asp106 provides a ligand contact to Zn(2+). Residue Glu140 is the Proton acceptor of the active site. The Zn(2+) site is built by Glu141, Glu169, and His355.

Belongs to the peptidase M20A family. DapE subfamily. Homodimer. It depends on Zn(2+) as a cofactor. Requires Co(2+) as cofactor.

The catalysed reaction is N-succinyl-(2S,6S)-2,6-diaminopimelate + H2O = (2S,6S)-2,6-diaminopimelate + succinate. It participates in amino-acid biosynthesis; L-lysine biosynthesis via DAP pathway; LL-2,6-diaminopimelate from (S)-tetrahydrodipicolinate (succinylase route): step 3/3. In terms of biological role, catalyzes the hydrolysis of N-succinyl-L,L-diaminopimelic acid (SDAP), forming succinate and LL-2,6-diaminopimelate (DAP), an intermediate involved in the bacterial biosynthesis of lysine and meso-diaminopimelic acid, an essential component of bacterial cell walls. This chain is Succinyl-diaminopimelate desuccinylase, found in Leptothrix cholodnii (strain ATCC 51168 / LMG 8142 / SP-6) (Leptothrix discophora (strain SP-6)).